The following is an 88-amino-acid chain: Guanine nucleotide-binding protein subunit gamma (88 aa).

Cys-84 carries the S-palmitoyl cysteine lipid modification. Cys-85 is modified (cysteine methyl ester). A lipid anchor (S-farnesyl cysteine) is attached at Cys-85. The propeptide at 86 to 88 (TIM) is removed in mature form.

Belongs to the G protein gamma family. G proteins are composed of 3 units, alpha, beta and gamma.

It localises to the membrane. The sequence is that of Guanine nucleotide-binding protein subunit gamma from Candida glabrata (strain ATCC 2001 / BCRC 20586 / JCM 3761 / NBRC 0622 / NRRL Y-65 / CBS 138) (Yeast).